The chain runs to 270 residues: MSPGSGVKSEYMKRYQEPRWEEYGPCYRELLHYRLGRRLLEQAHAPWLWDDWGPAGSSEDSASSESSGAGGPAPRCAPPSPPPPVEPATQEEAERRARGAPEEQDAEAGDAEAEDAEDAALPALPVKDVEDKPEQQTRTRETDKSPTSTEPRQQPSALFARGNRKAVKSPQRSSSKIKENKHPFALYGWGEKQTDTGSQKTHNVCASAPVHEIHESALRAKNRRQVEKRKLVAQRQRAHSVDVEKNRKMKASSSENPWMTEYMRCYSARA.

Met1 bears the N-acetylmethionine mark. The short motif at 9–15 (SEYMKRY) is the ST]-E-Y-X(3)-Y motif 1; required for efficient microtubule binding and stabilization element. Disordered stretches follow at residues 50 to 201 (DDWG…SQKT) and 231 to 255 (LVAQ…SSSE). Residues 53-67 (GPAGSSEDSASSESS) are compositionally biased toward low complexity. A compositionally biased stretch (pro residues) spans 75–86 (RCAPPSPPPPVE). Residues 92–101 (EAERRARGAP) show a composition bias toward basic and acidic residues. Acidic residues predominate over residues 102–118 (EEQDAEAGDAEAEDAED). Over residues 127-144 (KDVEDKPEQQTRTRETDK) the composition is skewed to basic and acidic residues. Over residues 145-156 (SPTSTEPRQQPS) the composition is skewed to polar residues. The short motif at 260–266 (TEYMRCY) is the ST]-E-Y-X(3)-Y motif 2; required for efficient microtubule binding and stabilization element.

Belongs to the CCSAP family. In terms of assembly, associates with microtubules; the association occurs on polyglutamylated tubulin.

Its subcellular location is the cytoplasm. It is found in the cytoskeleton. It localises to the microtubule organizing center. The protein localises to the centrosome. The protein resides in the centriole. Its subcellular location is the spindle. It is found in the cilium basal body. It localises to the cilium axoneme. The protein localises to the cell projection. The protein resides in the axon. Its subcellular location is the cilium. Its function is as follows. Plays a role in microtubule (MT) stabilization and this stabilization involves the maintenance of NUMA1 at the spindle poles. Colocalizes with polyglutamylated MTs to promote MT stabilization and regulate bipolar spindle formation in mitosis. Binding of CCSAP to centrosomes and the spindle around centrosomes during mitosis inhibits MT depolymerization, thereby stabilizing the mitotic spindle. May play a role in embryonic development. May be required for proper cilia beating. This is Centriole, cilia and spindle-associated protein (CCSAP) from Homo sapiens (Human).